Reading from the N-terminus, the 200-residue chain is MASSLTCTGVIWALLSFLSAATSCVGFFMPYWLWGSQLGKPVSFGTFRRCSYPVHDESRQMMVMVEECGRYASFQGIPSTEWRICTIVTGLGCGLLLLVALTALMGCCVSELISRTVGRVAGGIQFLGGLLIGAGCALYPLGWDSEEVRQTCGYISGQFDLGKCEIGWAYYCTGAGAAAAMLLCTWMACFSGKKQKHYPY.

Positions Met-1–Ser-23 are cleaved as a signal peptide. A run of 3 helical transmembrane segments spans residues Ile-84–Leu-104, Gly-123–Trp-143, and Ile-166–Trp-186.

The protein belongs to the LHFP family.

It localises to the membrane. This chain is LHFPL tetraspan subfamily member 6 protein, found in Mus musculus (Mouse).